Here is a 191-residue protein sequence, read N- to C-terminus: Transcription factor E (191 aa).

The HTH TFE/IIEalpha-type domain occupies 4–87 (RNKELLEIGR…YWHIETKRLP (84 aa)). The segment at 170–191 (APPKKEKKGKKSKKRSKKSKKK) is disordered. Residues 174–191 (KEKKGKKSKKRSKKSKKK) are compositionally biased toward basic residues.

Belongs to the TFE family. Monomer. Interaction with RNA polymerase subunits RpoF and RpoE is necessary for Tfe stimulatory transcription activity. Able to interact with Tbp and RNA polymerase in the absence of DNA promoter. Interacts both with the preinitiation and elongation complexes.

Functionally, transcription factor that plays a role in the activation of archaeal genes transcribed by RNA polymerase. Facilitates transcription initiation by enhancing TATA-box recognition by TATA-box-binding protein (Tbp), and transcription factor B (Tfb) and RNA polymerase recruitment. Not absolutely required for transcription in vitro, but particularly important in cases where Tbp or Tfb function is not optimal. It dynamically alters the nucleic acid-binding properties of RNA polymerases by stabilizing the initiation complex and destabilizing elongation complexes. Seems to translocate with the RNA polymerase following initiation and acts by binding to the non template strand of the transcription bubble in elongation complexes. The polypeptide is Transcription factor E (Pyrococcus horikoshii (strain ATCC 700860 / DSM 12428 / JCM 9974 / NBRC 100139 / OT-3)).